The sequence spans 395 residues: Chalcone synthase (395 aa).

The active site involves cysteine 169.

It belongs to the thiolase-like superfamily. Chalcone/stilbene synthases family.

The catalysed reaction is (E)-4-coumaroyl-CoA + 3 malonyl-CoA + 3 H(+) = 2',4,4',6'-tetrahydroxychalcone + 3 CO2 + 4 CoA. It participates in secondary metabolite biosynthesis; flavonoid biosynthesis. The primary product of this enzyme is 4,2',4',6'-tetrahydroxychalcone (also termed naringenin-chalcone or chalcone) which can under specific conditions spontaneously isomerize into naringenin. In Pinus strobus (Eastern white pine), this protein is Chalcone synthase (CHS).